Here is a 360-residue protein sequence, read N- to C-terminus: MSKCSRKKYIKTNLRQMTMDTMESQQDGSVTDSVAENESAHMQNQTGQNSIPTLTQVSVAGSGTGRGSPAVTLVQLPSGQTVHVQGIIQTPQPSVIQSPQIQTVQVATIAETDESAESEGVIDSHKRREILSRRPSYRKILNELSSDVPGVPKIEEEKSEEEGTPPNIATMAVPTSIYQTSTGQYIAIAQGGTIQISNPGSDGVQGLQALTMTNSGAPPPGATIVQYAAQSADGTQQFFVPGSQVVVQDEETELAPSHMAAATGDMPTYQIRAPTTALPQGVVMAASPGSLHSPQQLAEEATRKRELRLMKNREAARECRRKKKEYVKCLENRVAVLENQNKTLIEELKALKDLYCHKAE.

Residues 20-52 form a disordered region; the sequence is DTMESQQDGSVTDSVAENESAHMQNQTGQNSIP. Residues 104–163 form the KID domain; the sequence is VQVATIAETDESAESEGVIDSHKRREILSRRPSYRKILNELSSDVPGVPKIEEEKSEEEG. 5 positions are modified to phosphoserine: Ser-118, Ser-145, Ser-287, Ser-290, and Ser-293. Residues 302 to 360 form the bZIP domain; it reads TRKRELRLMKNREAARECRRKKKEYVKCLENRVAVLENQNKTLIEELKALKDLYCHKAE. Positions 303-328 are basic motif; the sequence is RKRELRLMKNREAARECRRKKKEYVK. The interval 330–351 is leucine-zipper; sequence LENRVAVLENQNKTLIEELKAL.

This sequence belongs to the bZIP family. In terms of assembly, binds DNA as a dimer. Interacts with FHL5. Interacts with CDC34. May interact with TSSK4. Stimulated by phosphorylation. Phosphorylated on Ser-118 by TSSK4 in vitro.

Its subcellular location is the nucleus. Transcriptional regulator that binds the cAMP response element (CRE), a sequence present in many viral and cellular promoters. Isoforms are either transcriptional activators or repressors. Isoform Tau is a transcriptional activator. Plays a role in spermatogenesis and is involved in spermatid maturation. The sequence is that of cAMP-responsive element modulator (CREM) from Canis lupus familiaris (Dog).